A 133-amino-acid polypeptide reads, in one-letter code: ATP synthase epsilon chain (133 aa).

Residues 81–110 (AAERPEQIDTERARKAKERAEQRLASEHVD) are disordered.

This sequence belongs to the ATPase epsilon chain family. In terms of assembly, F-type ATPases have 2 components, CF(1) - the catalytic core - and CF(0) - the membrane proton channel. CF(1) has five subunits: alpha(3), beta(3), gamma(1), delta(1), epsilon(1). CF(0) has three main subunits: a, b and c.

Its subcellular location is the cell membrane. Produces ATP from ADP in the presence of a proton gradient across the membrane. This Shouchella clausii (strain KSM-K16) (Alkalihalobacillus clausii) protein is ATP synthase epsilon chain.